The following is a 115-amino-acid chain: Macrophage migration inhibitory factor (115 aa).

The Proton acceptor; via imino nitrogen role is filled by Pro-2. Substrate-binding residues include Lys-33 and Ile-65. Lys-78 is modified (N6-acetyllysine; alternate). Lys-78 is modified (N6-succinyllysine; alternate). Asn-98 is a binding site for substrate.

It belongs to the MIF family. Homotrimer. Interacts with CD74 and CXCR2 extracellular domain and COPS5. Interacts with the USO1 and BNIPL.

Its subcellular location is the secreted. The protein resides in the cytoplasm. The enzyme catalyses 3-phenylpyruvate = enol-phenylpyruvate. It catalyses the reaction L-dopachrome = 5,6-dihydroxyindole-2-carboxylate. In terms of biological role, pro-inflammatory cytokine involved in the innate immune response to bacterial pathogens. The expression of MIF at sites of inflammation suggests a role as mediator in regulating the function of macrophages in host defense. Counteracts the anti-inflammatory activity of glucocorticoids. Has phenylpyruvate tautomerase and dopachrome tautomerase activity (in vitro), but the physiological substrate is not known. It is not clear whether the tautomerase activity has any physiological relevance, and whether it is important for cytokine activity. This chain is Macrophage migration inhibitory factor, found in Mus musculus (Mouse).